Consider the following 143-residue polypeptide: Flagellar assembly factor FliW (143 aa).

This sequence belongs to the FliW family. In terms of assembly, interacts with translational regulator CsrA and flagellin(s).

Its subcellular location is the cytoplasm. Its function is as follows. Acts as an anti-CsrA protein, binds CsrA and prevents it from repressing translation of its target genes, one of which is flagellin. Binds to flagellin and participates in the assembly of the flagellum. The protein is Flagellar assembly factor FliW of Clostridium botulinum (strain Langeland / NCTC 10281 / Type F).